Reading from the N-terminus, the 563-residue chain is F-box/kelch-repeat protein At5g42350 (563 aa).

The 47-residue stretch at 129-175 (YRKHVYLPDDILEMCLMRLPLTSLLNAHLVCKKWQSMANTQRFLQMR) folds into the F-box domain. Kelch repeat units lie at residues 184 to 231 (WLFL…SIHE), 232 to 282 (EIYI…ATEV), and 355 to 402 (VLIA…IICN).

The polypeptide is F-box/kelch-repeat protein At5g42350 (Arabidopsis thaliana (Mouse-ear cress)).